A 300-amino-acid chain; its full sequence is Ribosomal protein bS6--L-glutamate ligase (300 aa).

The ATP-grasp domain maps to 104-287 (MQLLARQGID…IAGKMIRWIE (184 aa)). Residues Lys141, 178–179 (EY), Asp187, and 211–213 (RSN) contribute to the ATP site. Residues Asp248, Glu260, and Asn262 each contribute to the Mg(2+) site. 3 residues coordinate Mn(2+): Asp248, Glu260, and Asn262.

The protein belongs to the RimK family. The cofactor is Mg(2+). Mn(2+) is required as a cofactor.

In terms of biological role, an L-glutamate ligase that catalyzes the ATP-dependent post-translational addition of glutamate residues to the C-terminus of ribosomal protein bS6 (RpsF). Is also able to catalyze the synthesis of poly-alpha-glutamate in vitro, via ATP hydrolysis from unprotected glutamate as substrate. The number of glutamate residues added to either RpsF or to poly-alpha-glutamate changes with pH. This chain is Ribosomal protein bS6--L-glutamate ligase, found in Escherichia fergusonii (strain ATCC 35469 / DSM 13698 / CCUG 18766 / IAM 14443 / JCM 21226 / LMG 7866 / NBRC 102419 / NCTC 12128 / CDC 0568-73).